Reading from the N-terminus, the 274-residue chain is 4-hydroxy-tetrahydrodipicolinate reductase (274 aa).

NAD(+)-binding positions include 11–16 (GGSGRM) and Glu-37. Arg-38 provides a ligand contact to NADP(+). Residues 101–103 (GTT) and 125–128 (APNM) each bind NAD(+). Catalysis depends on His-158, which acts as the Proton donor/acceptor. His-159 contacts (S)-2,3,4,5-tetrahydrodipicolinate. Lys-162 (proton donor) is an active-site residue. 168-169 (GT) provides a ligand contact to (S)-2,3,4,5-tetrahydrodipicolinate.

This sequence belongs to the DapB family.

The protein localises to the cytoplasm. The catalysed reaction is (S)-2,3,4,5-tetrahydrodipicolinate + NAD(+) + H2O = (2S,4S)-4-hydroxy-2,3,4,5-tetrahydrodipicolinate + NADH + H(+). It carries out the reaction (S)-2,3,4,5-tetrahydrodipicolinate + NADP(+) + H2O = (2S,4S)-4-hydroxy-2,3,4,5-tetrahydrodipicolinate + NADPH + H(+). It functions in the pathway amino-acid biosynthesis; L-lysine biosynthesis via DAP pathway; (S)-tetrahydrodipicolinate from L-aspartate: step 4/4. Catalyzes the conversion of 4-hydroxy-tetrahydrodipicolinate (HTPA) to tetrahydrodipicolinate. The chain is 4-hydroxy-tetrahydrodipicolinate reductase from Shewanella pealeana (strain ATCC 700345 / ANG-SQ1).